We begin with the raw amino-acid sequence, 533 residues long: MVVSSPSVSLLHSPVEKLSAQLEKTTLLQDIPPGSLSENDNSTTFIKPPLETASSSTPIPSSSSSGVLNPSSVRGKPVACLFVASLNSSRSEEELTATVKDYFQQWGPLLHVKVLKDWLQRPYSFVQFQNTDDASKALSEAQNTILDGRHIRIERAKVNRTIRISSAPHQPYITKKDIDNLLEPYGEVEDVTEIPDQSAFLVRFVYRDEAIAAYTALKHSAWPVLWAENVTYQNGHYKKKGSSPFSPPNAHSRRRKSQGKDQSNTPVIKAPAPIPFSVSSDPPSTMGRSNSAVQSPSYFAHSLVNSTEFSTPNESLSSLPSILPSIPSLESGKAELPTDGSFEQPGYPMNPSMMFAAMPPPIDPYSIFVGQLDPVNCTHYLLVDLFSKYGKVIDCKIIHQSKKPAFAFLRFDSQQAAYAAVCGKTRSPHQKKPLRVEFRQLRPMQQFSPQYQYPSYPYPMFPAPFSPPRNAMMPIPAPMDQFSTFHQSMATLPPGAVPTSIPQSYYPIYSPEMAMPQSYSPMYYTHNPPMDGN.

Residues 30–68 are disordered; that stretch reads DIPPGSLSENDNSTTFIKPPLETASSSTPIPSSSSSGVL. Over residues 36-45 the composition is skewed to polar residues; it reads LSENDNSTTF. Low complexity predominate over residues 54-68; it reads SSSTPIPSSSSSGVL. Positions 79–158 constitute an RRM 1 domain; that stretch reads ACLFVASLNS…RHIRIERAKV (80 aa). The tract at residues 237–292 is disordered; it reads YKKKGSSPFSPPNAHSRRRKSQGKDQSNTPVIKAPAPIPFSVSSDPPSTMGRSNSA. Residues 277-292 are compositionally biased toward polar residues; that stretch reads SVSSDPPSTMGRSNSA. The region spanning 365-441 is the RRM 2 domain; it reads YSIFVGQLDP…KPLRVEFRQL (77 aa).

The protein resides in the cytoplasm. Negative regulator of sexual differentiation. Acts by repressing the transcription of meiosis-inducing, ste11-regulated genes. The protein is Multicopy suppressor of sporulation protein msa1 (msa1) of Schizosaccharomyces pombe (strain 972 / ATCC 24843) (Fission yeast).